Consider the following 280-residue polypeptide: Urease accessory protein UreD 1 (280 aa).

Belongs to the UreD family. UreD, UreF and UreG form a complex that acts as a GTP-hydrolysis-dependent molecular chaperone, activating the urease apoprotein by helping to assemble the nickel containing metallocenter of UreC. The UreE protein probably delivers the nickel.

It is found in the cytoplasm. Functionally, required for maturation of urease via the functional incorporation of the urease nickel metallocenter. In Bradyrhizobium sp. (strain BTAi1 / ATCC BAA-1182), this protein is Urease accessory protein UreD 1.